Here is a 202-residue protein sequence, read N- to C-terminus: Nucleoid occlusion factor SlmA (202 aa).

The HTH tetR-type domain occupies 14–75; that stretch reads KERQQQVLEV…ALIERIEQTL (62 aa). A DNA-binding region (H-T-H motif) is located at residues 38–57; sequence TTERLAKAVGVSEGALYRYF.

It belongs to the nucleoid occlusion factor SlmA family. In terms of assembly, homodimer. Interacts with FtsZ.

Its subcellular location is the cytoplasm. It is found in the nucleoid. Its function is as follows. Required for nucleoid occlusion (NO) phenomenon, which prevents Z-ring formation and cell division over the nucleoid. Acts as a DNA-associated cell division inhibitor that binds simultaneously chromosomal DNA and FtsZ, and disrupts the assembly of FtsZ polymers. SlmA-DNA-binding sequences (SBS) are dispersed on non-Ter regions of the chromosome, preventing FtsZ polymerization at these regions. The chain is Nucleoid occlusion factor SlmA from Haemophilus ducreyi (strain 35000HP / ATCC 700724).